We begin with the raw amino-acid sequence, 223 residues long: Deoxyribose-phosphate aldolase (223 aa).

Asp89 serves as the catalytic Proton donor/acceptor. Residue Lys154 is the Schiff-base intermediate with acetaldehyde of the active site. Lys183 (proton donor/acceptor) is an active-site residue.

This sequence belongs to the DeoC/FbaB aldolase family. DeoC type 1 subfamily.

Its subcellular location is the cytoplasm. It carries out the reaction 2-deoxy-D-ribose 5-phosphate = D-glyceraldehyde 3-phosphate + acetaldehyde. It participates in carbohydrate degradation; 2-deoxy-D-ribose 1-phosphate degradation; D-glyceraldehyde 3-phosphate and acetaldehyde from 2-deoxy-alpha-D-ribose 1-phosphate: step 2/2. Its function is as follows. Catalyzes a reversible aldol reaction between acetaldehyde and D-glyceraldehyde 3-phosphate to generate 2-deoxy-D-ribose 5-phosphate. The sequence is that of Deoxyribose-phosphate aldolase from Thermoanaerobacter pseudethanolicus (strain ATCC 33223 / 39E) (Clostridium thermohydrosulfuricum).